Reading from the N-terminus, the 61-residue chain is DNA-directed RNA polymerase subunit Rpo6 (61 aa).

The protein belongs to the archaeal Rpo6/eukaryotic RPB6 RNA polymerase subunit family. As to quaternary structure, part of the RNA polymerase complex.

Its subcellular location is the cytoplasm. The enzyme catalyses RNA(n) + a ribonucleoside 5'-triphosphate = RNA(n+1) + diphosphate. Its function is as follows. DNA-dependent RNA polymerase (RNAP) catalyzes the transcription of DNA into RNA using the four ribonucleoside triphosphates as substrates. This is DNA-directed RNA polymerase subunit Rpo6 from Thermoplasma acidophilum (strain ATCC 25905 / DSM 1728 / JCM 9062 / NBRC 15155 / AMRC-C165).